The following is a 563-amino-acid chain: Pentatricopeptide repeat-containing protein At4g39620, chloroplastic (563 aa).

Residues 1–47 constitute a chloroplast transit peptide; the sequence is MDYLLTSPSSLRFSDFISSIPKETDHKWLRFSVNLGDARRSTRTRIT. 9 PPR repeats span residues 132–166, 167–197, 207–241, 242–276, 277–311, 312–346, 347–381, 382–416, and 417–451; these read DNGVYSKLISVMGKKGQTRMAMWLFSEMKNSGCRP, DASVYNALITAHLHTRDKAKALEKVRGYLDK, NVVTYNILLRAFAQSGKVDQVNALFKDLDMSPVSP, DVYTFNGVMDAYGKNGMIKEMEAVLTRMRSNECKP, DIITFNVLIDSYGKKQEFEKMEQTFKSLMRSKEKP, TLPTFNSMIINYGKARMIDKAEWVFKKMNDMNYIP, SFITYECMIMMYGYCGSVSRAREIFEEVGESDRVL, KASTLNAMLEVYCRNGLYIEADKLFHNASAFRVHP, and DASTYKFLYKAYTKADMKEQVQILMKKMEKDGIVP. Disordered regions lie at residues 468 to 501 and 520 to 551; these read PGSGSENRKSTRSSRSRDSPKGRGGNQLTEFQDK and NLSGHDKGSRDESRKPSQEKQPLFASDQNNMM. Over residues 520–537 the composition is skewed to basic and acidic residues; that stretch reads NLSGHDKGSRDESRKPSQ.

This sequence belongs to the PPR family. P subfamily.

It is found in the plastid. The protein localises to the chloroplast. Functionally, essential for embryo development. In Arabidopsis thaliana (Mouse-ear cress), this protein is Pentatricopeptide repeat-containing protein At4g39620, chloroplastic.